Consider the following 119-residue polypeptide: MGLLFVELLPRHGDGGGPASAVLKCRRCRVDAASADAILSRDFRGRFGRAYLFDHVVNISLGPNEDRYLMTGLHTVKDIYCSCCQQILGWRYEKAYEESEKYKEGKFILEKARMWKEAR.

In terms of domain architecture, Yippee spans 21 to 118 (AVLKCRRCRV…LEKARMWKEA (98 aa)). 4 residues coordinate Zn(2+): cysteine 25, cysteine 28, cysteine 81, and cysteine 84.

This sequence belongs to the yippee family.

In Oryza sativa subsp. japonica (Rice), this protein is Putative yippee-like protein Os10g0369500.